Reading from the N-terminus, the 322-residue chain is FAD-dependent monooxygenase subE (322 aa).

Glutamate 35, glycine 49, arginine 108, and aspartate 313 together coordinate FAD.

Belongs to the paxM FAD-dependent monooxygenase family. The cofactor is FAD.

It participates in secondary metabolite biosynthesis; terpenoid biosynthesis. FAD-dependent monooxygenase; part of the gene cluster that mediates the biosynthesis of the immunosuppressants subglutinols, meroterpenoids consisting of an alpha-pyrone (4-hydroxy-5,6-dimethyl-2-pyrone) moiety attached to a decalin core fused to a five-membered cyclic ether carrying a prenylside chain. The first step of the pathway is the synthesis of the alpha-pyrone moiety by the polyketide synthase subA via condensation of one acetyl-CoA starter unit with 3 malonyl-CoA units and 2 methylations. The alpha-pyrone is then combined with geranylgeranyl pyrophosphate (GGPP) formed by the GGPP synthase subD through the action of the prenyltransferase subC to yield a linear alpha-pyrone diterpenoid. Subsequent steps in the subglutinol biosynthetic pathway involve the decalin core formation, which is thought to be initiated by the epoxidation of the C10-C11 olefin by the FAD-dependent oxidoreductase subE. The following cyclization cascade would be catalyzed by the terpene cyclase subB. Lastly, the FAD-dependent dehydrogenase subF probably catalyzes the five-membered cyclic ether formation to complete the formation of subglutinol A. Subsequent redox reactions appear to give rise to subglutinol C and D, however, it remains unclear which enzymes are responsible for these transformations. SubD may have secondary function in the conversion of the identified subglutinols to subglutinol analog 45, which seems to be the major product of the cluster. This Metarhizium robertsii (strain ARSEF 23 / ATCC MYA-3075) (Metarhizium anisopliae (strain ARSEF 23)) protein is FAD-dependent monooxygenase subE.